The chain runs to 186 residues: Pyridoxal 5'-phosphate synthase subunit PdxT (186 aa).

46-48 serves as a coordination point for L-glutamine; sequence GES. Cys-75 (nucleophile) is an active-site residue. Residues Arg-101 and 127-128 contribute to the L-glutamine site; that span reads IR. Active-site charge relay system residues include His-164 and Glu-166.

The protein belongs to the glutaminase PdxT/SNO family. In terms of assembly, in the presence of PdxS, forms a dodecamer of heterodimers. Only shows activity in the heterodimer.

The catalysed reaction is aldehydo-D-ribose 5-phosphate + D-glyceraldehyde 3-phosphate + L-glutamine = pyridoxal 5'-phosphate + L-glutamate + phosphate + 3 H2O + H(+). The enzyme catalyses L-glutamine + H2O = L-glutamate + NH4(+). Its pathway is cofactor biosynthesis; pyridoxal 5'-phosphate biosynthesis. Catalyzes the hydrolysis of glutamine to glutamate and ammonia as part of the biosynthesis of pyridoxal 5'-phosphate. The resulting ammonia molecule is channeled to the active site of PdxS. This is Pyridoxal 5'-phosphate synthase subunit PdxT from Methanococcus aeolicus (strain ATCC BAA-1280 / DSM 17508 / OCM 812 / Nankai-3).